A 184-amino-acid polypeptide reads, in one-letter code: Inorganic pyrophosphatase (184 aa).

Substrate-binding residues include Lys-19, Arg-33, and Tyr-45. 3 residues coordinate Mg(2+): Asp-55, Asp-60, and Asp-92. Tyr-129 lines the substrate pocket.

This sequence belongs to the PPase family. In terms of assembly, homohexamer. Requires Mg(2+) as cofactor.

It is found in the cytoplasm. It catalyses the reaction diphosphate + H2O = 2 phosphate + H(+). Functionally, catalyzes the hydrolysis of inorganic pyrophosphate (PPi) forming two phosphate ions. This chain is Inorganic pyrophosphatase, found in Mycoplasma pneumoniae (strain ATCC 29342 / M129 / Subtype 1) (Mycoplasmoides pneumoniae).